The primary structure comprises 387 residues: Na(+)/H(+) antiporter NhaA (387 aa).

The next 12 membrane-spanning stretches (helical) occupy residues 16–36 (AGGV…NSSI), 53–73 (IEHY…GLEL), 89–109 (LLPI…HMFF), 118–138 (GSGI…SLLG), 147–167 (VFLT…IAIF), 171–191 (GIDV…FILN), 197–217 (ILWP…HSGV), 220–240 (TITG…PDSI), 251–271 (PVAF…IIDS), 283–303 (IGIF…FCAI), 321–341 (VIGV…ITLL), and 354–374 (IAIM…LKMT).

Belongs to the NhaA Na(+)/H(+) (TC 2.A.33) antiporter family.

The protein resides in the cell inner membrane. It catalyses the reaction Na(+)(in) + 2 H(+)(out) = Na(+)(out) + 2 H(+)(in). In terms of biological role, na(+)/H(+) antiporter that extrudes sodium in exchange for external protons. The chain is Na(+)/H(+) antiporter NhaA from Cytophaga hutchinsonii (strain ATCC 33406 / DSM 1761 / CIP 103989 / NBRC 15051 / NCIMB 9469 / D465).